We begin with the raw amino-acid sequence, 158 residues long: Transcriptional repressor NrdR (158 aa).

A zinc finger spans residues cysteine 3 to cysteine 34. In terms of domain architecture, ATP-cone spans proline 49 to glutamate 139.

The protein belongs to the NrdR family. Zn(2+) is required as a cofactor.

In terms of biological role, negatively regulates transcription of bacterial ribonucleotide reductase nrd genes and operons by binding to NrdR-boxes. This Bordetella petrii (strain ATCC BAA-461 / DSM 12804 / CCUG 43448) protein is Transcriptional repressor NrdR.